A 132-amino-acid polypeptide reads, in one-letter code: Small ribosomal subunit protein uS8 (132 aa).

Belongs to the universal ribosomal protein uS8 family. Part of the 30S ribosomal subunit. Contacts proteins S5 and S12.

Its function is as follows. One of the primary rRNA binding proteins, it binds directly to 16S rRNA central domain where it helps coordinate assembly of the platform of the 30S subunit. The polypeptide is Small ribosomal subunit protein uS8 (Azorhizobium caulinodans (strain ATCC 43989 / DSM 5975 / JCM 20966 / LMG 6465 / NBRC 14845 / NCIMB 13405 / ORS 571)).